We begin with the raw amino-acid sequence, 183 residues long: ATP-dependent protease subunit HslV (183 aa).

Thr7 is a catalytic residue. Na(+)-binding residues include Gly162, Cys165, and Thr168.

Belongs to the peptidase T1B family. HslV subfamily. As to quaternary structure, a double ring-shaped homohexamer of HslV is capped on each side by a ring-shaped HslU homohexamer. The assembly of the HslU/HslV complex is dependent on binding of ATP.

Its subcellular location is the cytoplasm. It catalyses the reaction ATP-dependent cleavage of peptide bonds with broad specificity.. With respect to regulation, allosterically activated by HslU binding. Its function is as follows. Protease subunit of a proteasome-like degradation complex believed to be a general protein degrading machinery. In Chromobacterium violaceum (strain ATCC 12472 / DSM 30191 / JCM 1249 / CCUG 213 / NBRC 12614 / NCIMB 9131 / NCTC 9757 / MK), this protein is ATP-dependent protease subunit HslV.